Consider the following 81-residue polypeptide: Defensin-like protein 130 (81 aa).

The N-terminal stretch at 1 to 21 (MTKNTSLTIFMVVLVIGMLYT) is a signal peptide. Cystine bridges form between C32/C81, C41/C63, C46/C75, and C50/C77.

This sequence belongs to the DEFL family.

Its subcellular location is the secreted. The chain is Defensin-like protein 130 (LCR28) from Arabidopsis thaliana (Mouse-ear cress).